Here is a 473-residue protein sequence, read N- to C-terminus: PTS system trehalose-specific EIIBC component (473 aa).

In terms of domain architecture, PTS EIIB type-1 spans 1–89; the sequence is MMSKINQTDI…IASTGQAQVD (89 aa). Topologically, residues 1–110 are cytoplasmic; it reads MMSKINQTDI…MKWHEQLISH (110 aa). Cysteine 29 functions as the Phosphocysteine intermediate; for EIIB activity in the catalytic mechanism. Residue cysteine 29 is modified to Phosphocysteine; by EIIA. In terms of domain architecture, PTS EIIC type-1 spans 109 to 473; that stretch reads SHFAVIFFPL…KYRLGTLDIV (365 aa). Residues 111-131 traverse the membrane as a helical segment; it reads FAVIFFPLLPALISGGLILGF. Residues 132–158 lie on the Periplasmic side of the membrane; it reads RNVIGDLPMSNGQTLAQMYPSLQTIYD. The helical transmembrane segment at 159–179 threads the bilayer; the sequence is FLWLIGEAIFFYLPVGICWSA. Over 180–187 the chain is Cytoplasmic; that stretch reads VKKMGGTP. Residues 188-208 form a helical membrane-spanning segment; that stretch reads ILGIVLGVTLVSPQLMNAYLL. Over 209-225 the chain is Periplasmic; it reads GQQLPEVWDFGMFSIAK. A helical transmembrane segment spans residues 226 to 246; sequence VGYQAQVIPALLAGLALGVIE. Topologically, residues 247–258 are cytoplasmic; sequence TRLKRIVPDYLY. The chain crosses the membrane as a helical span at residues 259–279; sequence LVVVPVCSLILAVFLAHALIG. The Periplasmic portion of the chain corresponds to 280–300; it reads PFGRMIGDGVAFAVRHLMTGS. Residues 301 to 321 traverse the membrane as a helical segment; sequence FAPIGAALFGFLYAPLVITGV. Residues 322–340 lie on the Cytoplasmic side of the membrane; sequence HQTTLAIDLQMIQSMGGTP. Residues 341 to 361 traverse the membrane as a helical segment; that stretch reads VWPLIALSNIAQGSAVIGIII. At 362 to 370 the chain is on the periplasmic side; it reads SSRKHNERE. A helical membrane pass occupies residues 371-391; it reads ISVPAAISAWLGVTEPAMYGI. The Cytoplasmic segment spans residues 392–398; the sequence is NLKYRFP. A helical transmembrane segment spans residues 399 to 419; sequence MLCAMIGSGLAGLLCGLNGVM. Over 420-440 the chain is Periplasmic; the sequence is ANGIGVGGLPGILSIQPSYWQ. The chain crosses the membrane as a helical span at residues 441 to 461; it reads VFALAMAIAIIIPIVLTSFIY. Over 462–473 the chain is Cytoplasmic; that stretch reads QRKYRLGTLDIV.

It is found in the cell inner membrane. It catalyses the reaction alpha,alpha-trehalose(out) + N(pros)-phospho-L-histidyl-[protein] = alpha,alpha-trehalose 6-phosphate(in) + L-histidyl-[protein]. In terms of biological role, the phosphoenolpyruvate-dependent sugar phosphotransferase system (sugar PTS), a major carbohydrate active transport system, catalyzes the phosphorylation of incoming sugar substrates concomitantly with their translocation across the cell membrane. This system is involved in trehalose transport at low osmolarity. The polypeptide is PTS system trehalose-specific EIIBC component (treB) (Escherichia coli (strain K12)).